A 444-amino-acid chain; its full sequence is Tol-Pal system protein TolB (444 aa).

The N-terminal stretch at 1–18 (MKNIIYCILLLFSFNSYA) is a signal peptide.

Belongs to the TolB family. As to quaternary structure, the Tol-Pal system is composed of five core proteins: the inner membrane proteins TolA, TolQ and TolR, the periplasmic protein TolB and the outer membrane protein Pal. They form a network linking the inner and outer membranes and the peptidoglycan layer.

It localises to the periplasm. Its function is as follows. Part of the Tol-Pal system, which plays a role in outer membrane invagination during cell division and is important for maintaining outer membrane integrity. The polypeptide is Tol-Pal system protein TolB (Rickettsia bellii (strain OSU 85-389)).